The chain runs to 372 residues: GRASP65 homolog protein 1 (372 aa).

N-acetylmethionine is present on Met1. PDZ GRASP-type domains lie at 66–183 and 188–276; these read SGLR…WTPL and FTYH…YGFL. Residues 66–292 are GRASP; it reads SGLRIVWVDE…KHCPQQAQQQ (227 aa). At Ser155 the chain carries Phosphoserine. The interval 312–372 is disordered; that stretch reads VPSAFTAPPV…PPPQKQSSSD (61 aa).

Homodimer. Interacts with BUG1 (via C-terminus), probably forming a heterooligomer consisting of a GRH1 dimer and a BUG1 dimer. Interacts with COPII coat components SEC23, SEC24, SFB2 and SFB3. N-terminal acetylation; by N-terminal acetyltransferase NatC.

Its subcellular location is the cytoplasm. It is found in the golgi apparatus. The protein resides in the cis-Golgi network membrane. Functionally, involved in the spindle assembly checkpoint. Involved in ER to Golgi vesicle-mediated transport by either facilitating USO1-dependent and -independent tethering or increasing target accuracy of fusion events of COPII-coated vesicles. The chain is GRASP65 homolog protein 1 (GRH1) from Saccharomyces cerevisiae (strain ATCC 204508 / S288c) (Baker's yeast).